Here is a 195-residue protein sequence, read N- to C-terminus: Imidazoleglycerol-phosphate dehydratase (195 aa).

Belongs to the imidazoleglycerol-phosphate dehydratase family.

Its subcellular location is the cytoplasm. It catalyses the reaction D-erythro-1-(imidazol-4-yl)glycerol 3-phosphate = 3-(imidazol-4-yl)-2-oxopropyl phosphate + H2O. The protein operates within amino-acid biosynthesis; L-histidine biosynthesis; L-histidine from 5-phospho-alpha-D-ribose 1-diphosphate: step 6/9. This Paraburkholderia xenovorans (strain LB400) protein is Imidazoleglycerol-phosphate dehydratase.